The primary structure comprises 441 residues: POC1 centriolar protein homolog A (441 aa).

WD repeat units lie at residues 16–55, 58–97, 100–139, 142–181, 184–223, 226–265, and 268–307; these read GHRD…RAYR, GHKD…ESTA, AHTG…FLFS, QHIN…CIQS, EHGG…LIQH, VHSG…LLYT, and GHQG…GSYP. Positions 347-376 are disordered; that stretch reads DLEPHITEMSVKDRSSPLSYTSRSVDQHHP. Positions 348 to 361 are enriched in basic and acidic residues; it reads LEPHITEMSVKDRS. Residues 400 to 427 adopt a coiled-coil conformation; it reads LTRTVGILEQRLSLTEDKLKECIEQQQA.

Belongs to the WD repeat POC1 family. As to quaternary structure, interacts with pat.

Its subcellular location is the cytoplasm. The protein localises to the cytoskeleton. Its function is as follows. May play an important role in centriole assembly and/or stability and ciliogenesis. In Xenopus laevis (African clawed frog), this protein is POC1 centriolar protein homolog A (poc1a).